The primary structure comprises 610 residues: MHFQAFWLCLGLLFISINAEFMDDDVETEDFEENSEEIDVNESELSSEIKYKTPQPIGEVYFAETFDSGRLAGWVLSKAKKDDMDEEISIYDGRWEIEELKENQVPGDRGLVLKSRAKHHAISAVLAKPFIFADKPLIVQYEVNFQDGIDCGGAYIKLLADTDDLILENFYDKTSYIIMFGPDKCGEDYKLHFIFRHKHPKTGVFEEKHAKPPDVDLKKFFTDRKTHLYTLVMNPDDTFEVLVDQTVVNKGSLLEDVVPPIKPPKEIEDPNDKKPEEWDERAKIPDPSAVKPEDWDESEPAQIEDSSVVKPAGWLDDEPKFIPDPNAEKPDDWNEDTDGEWEAPQILNPACRIGCGEWKPPMIDNPKYKGVWRPPLVDNPNYQGIWSPRKIPNPDYFEDDHPFLLTSFSALGLELWSMTSDIYFDNFIICSEKEVADHWAADGWRWKIMIANANKPGVLKQLMAAAEGHPWLWLIYLVTAGVPIALITSFCWPRKVKKKHKDTEYKKTDICIPQTKGVLEQEEKEEKAALEKPMDLEEEKKQNDGEMLEKEEESEPEEKSEEEIEIIEGQEESNQSNKSGSEDEMKEADESTGSGDGPIKSVRKRRVRKD.

An N-terminal signal peptide occupies residues 1-19 (MHFQAFWLCLGLLFISINA). Over 20-471 (EFMDDDVETE…LMAAAEGHPW (452 aa)) the chain is Lumenal. Position 128 is an N6-acetyllysine (K128). C151 and C185 form a disulfide bridge. Residues 258–338 (VPPIKPPKEI…KPDDWNEDTD (81 aa)) are disordered. The span at 263 to 284 (PPKEIEDPNDKKPEEWDERAKI) shows a compositional bias: basic and acidic residues. Tandem repeats lie at residues 267 to 280 (IEDPNDKKPEEWDE), 284 to 297 (IPDPSAVKPEDWDE), 303 to 316 (IEDSSVVKPAGWLD), 322 to 335 (IPDPNAEKPDDWNE), 339 to 352 (GEWEAPQILNPACR), 356 to 369 (GEWKPPMIDNPKYK), 370 to 383 (GVWRPPLVDNPNYQ), and 384 to 397 (GIWSPRKIPNPDYF). A compositionally biased stretch (basic and acidic residues) spans 317–332 (DEPKFIPDPNAEKPDD). The segment at 317 to 350 (DEPKFIPDPNAEKPDDWNEDTDGEWEAPQILNPA) is interaction with PPIB. A disulfide bridge links C351 with C355. The chain crosses the membrane as a helical span at residues 472–492 (LWLIYLVTAGVPIALITSFCW). Residues 493 to 610 (PRKVKKKHKD…SVRKRRVRKD (118 aa)) are Cytoplasmic-facing. The span at 521–548 (QEEKEEKAALEKPMDLEEEKKQNDGEML) shows a compositional bias: basic and acidic residues. A disordered region spans residues 521-610 (QEEKEEKAAL…SVRKRRVRKD (90 aa)). Positions 549 to 571 (EKEEESEPEEKSEEEIEIIEGQE) are enriched in acidic residues. S560, S576, S579, S581, S591, S594, and S601 each carry phosphoserine. The segment covering 601–610 (SVRKRRVRKD) has biased composition (basic residues).

This sequence belongs to the calreticulin family. In terms of assembly, interacts with PPIB. Interacts with ADAM2. Interacts with PDILT. Detected in testis (at protein level). Detected in testis.

The protein resides in the endoplasmic reticulum membrane. Functionally, functions during spermatogenesis as a chaperone for a range of client proteins that are important for sperm adhesion onto the egg zona pellucida and for subsequent penetration of the zona pellucida. Required for normal sperm migration from the uterus into the oviduct. Required for normal male fertility. Binds calcium ions. This chain is Calmegin (CLGN), found in Homo sapiens (Human).